The chain runs to 332 residues: Heat-inducible transcription repressor HrcA (332 aa).

The protein belongs to the HrcA family.

Functionally, negative regulator of class I heat shock genes (grpE-dnaK-dnaJ and groELS operons). Prevents heat-shock induction of these operons. In Mycoplasma mobile (strain ATCC 43663 / 163K / NCTC 11711) (Mesomycoplasma mobile), this protein is Heat-inducible transcription repressor HrcA.